Consider the following 136-residue polypeptide: Small ribosomal subunit protein uS9 (136 aa).

Residues 111-136 (TRDPRMKERKKTGQPGARKRFQFSKR) form a disordered region. Residues 117 to 136 (KERKKTGQPGARKRFQFSKR) show a composition bias toward basic residues.

The protein belongs to the universal ribosomal protein uS9 family.

This Methylacidiphilum infernorum (isolate V4) (Methylokorus infernorum (strain V4)) protein is Small ribosomal subunit protein uS9.